A 425-amino-acid chain; its full sequence is Serine--tRNA ligase (425 aa).

An L-serine-binding site is contributed by 231–233 (TAE). 262–264 (RSE) contributes to the ATP binding site. Glu285 contacts L-serine. Position 349-352 (349-352 (EISS)) interacts with ATP. Residue Ser385 coordinates L-serine.

This sequence belongs to the class-II aminoacyl-tRNA synthetase family. Type-1 seryl-tRNA synthetase subfamily. As to quaternary structure, homodimer. The tRNA molecule binds across the dimer.

Its subcellular location is the cytoplasm. It carries out the reaction tRNA(Ser) + L-serine + ATP = L-seryl-tRNA(Ser) + AMP + diphosphate + H(+). It catalyses the reaction tRNA(Sec) + L-serine + ATP = L-seryl-tRNA(Sec) + AMP + diphosphate + H(+). The protein operates within aminoacyl-tRNA biosynthesis; selenocysteinyl-tRNA(Sec) biosynthesis; L-seryl-tRNA(Sec) from L-serine and tRNA(Sec): step 1/1. In terms of biological role, catalyzes the attachment of serine to tRNA(Ser). Is also able to aminoacylate tRNA(Sec) with serine, to form the misacylated tRNA L-seryl-tRNA(Sec), which will be further converted into selenocysteinyl-tRNA(Sec). The chain is Serine--tRNA ligase from Bartonella henselae (strain ATCC 49882 / DSM 28221 / CCUG 30454 / Houston 1) (Rochalimaea henselae).